A 205-amino-acid chain; its full sequence is Protein-L-isoaspartate O-methyltransferase (205 aa).

Serine 56 is a catalytic residue.

It belongs to the methyltransferase superfamily. L-isoaspartyl/D-aspartyl protein methyltransferase family.

Its subcellular location is the cytoplasm. It carries out the reaction [protein]-L-isoaspartate + S-adenosyl-L-methionine = [protein]-L-isoaspartate alpha-methyl ester + S-adenosyl-L-homocysteine. In terms of biological role, catalyzes the methyl esterification of L-isoaspartyl residues in peptides and proteins that result from spontaneous decomposition of normal L-aspartyl and L-asparaginyl residues. It plays a role in the repair and/or degradation of damaged proteins. This chain is Protein-L-isoaspartate O-methyltransferase, found in Pyrobaculum aerophilum (strain ATCC 51768 / DSM 7523 / JCM 9630 / CIP 104966 / NBRC 100827 / IM2).